The following is a 426-amino-acid chain: Adenylosuccinate synthetase 2 (426 aa).

GTP is bound by residues 12 to 18 and 40 to 42; these read GDEGKGK and GHT. Catalysis depends on D13, which acts as the Proton acceptor. The Mg(2+) site is built by D13 and G40. IMP contacts are provided by residues 13–16, 38–41, R147, N223, T238, and R302; these read DEGK and NAGH. The active-site Proton donor is the H41. A substrate-binding site is contributed by 298 to 304; the sequence is TNTGRRR. Residues R304, 330-332, and 412-414 contribute to the GTP site; these read KLD and GVG.

This sequence belongs to the adenylosuccinate synthetase family. Homodimer. The cofactor is Mg(2+).

It is found in the cytoplasm. It catalyses the reaction IMP + L-aspartate + GTP = N(6)-(1,2-dicarboxyethyl)-AMP + GDP + phosphate + 2 H(+). It functions in the pathway purine metabolism; AMP biosynthesis via de novo pathway; AMP from IMP: step 1/2. Functionally, plays an important role in the de novo pathway and in the salvage pathway of purine nucleotide biosynthesis. Catalyzes the first committed step in the biosynthesis of AMP from IMP. The protein is Adenylosuccinate synthetase 2 of Laccaria bicolor (strain S238N-H82 / ATCC MYA-4686) (Bicoloured deceiver).